We begin with the raw amino-acid sequence, 224 residues long: Flagellar L-ring protein (224 aa).

An N-terminal signal peptide occupies residues 1 to 15 (MKWYLVALSGLLLSG). The N-palmitoyl cysteine moiety is linked to residue Cys-16. Residue Cys-16 is the site of S-diacylglycerol cysteine attachment.

Belongs to the FlgH family. In terms of assembly, the basal body constitutes a major portion of the flagellar organelle and consists of four rings (L,P,S, and M) mounted on a central rod.

Its subcellular location is the cell outer membrane. The protein resides in the bacterial flagellum basal body. Functionally, assembles around the rod to form the L-ring and probably protects the motor/basal body from shearing forces during rotation. The sequence is that of Flagellar L-ring protein from Trichlorobacter lovleyi (strain ATCC BAA-1151 / DSM 17278 / SZ) (Geobacter lovleyi).